Consider the following 31-residue polypeptide: Cyclotide cter-E (31 aa).

The cyclopeptide (Gly-Asp) cross-link spans Gly1–Asp31. Intrachain disulfides connect Cys4-Cys21, Cys8-Cys23, and Cys13-Cys28.

In terms of processing, contains 3 disulfide bonds. This is a cyclic peptide.

Its function is as follows. Probably participates in a plant defense mechanism. This Clitoria ternatea (Butterfly pea) protein is Cyclotide cter-E.